Consider the following 336-residue polypeptide: tRNA N6-adenosine threonylcarbamoyltransferase (336 aa).

The Fe cation site is built by His114 and His118. Substrate-binding positions include 136 to 140 (LVSGG), Asp169, Gly182, Asp186, and Asn275. Residue Asp301 coordinates Fe cation.

It belongs to the KAE1 / TsaD family. Fe(2+) is required as a cofactor.

Its subcellular location is the cytoplasm. The enzyme catalyses L-threonylcarbamoyladenylate + adenosine(37) in tRNA = N(6)-L-threonylcarbamoyladenosine(37) in tRNA + AMP + H(+). Functionally, required for the formation of a threonylcarbamoyl group on adenosine at position 37 (t(6)A37) in tRNAs that read codons beginning with adenine. Is involved in the transfer of the threonylcarbamoyl moiety of threonylcarbamoyl-AMP (TC-AMP) to the N6 group of A37, together with TsaE and TsaB. TsaD likely plays a direct catalytic role in this reaction. This chain is tRNA N6-adenosine threonylcarbamoyltransferase, found in Streptococcus pneumoniae serotype 4 (strain ATCC BAA-334 / TIGR4).